The following is a 153-amino-acid chain: Transcription antitermination protein NusB (153 aa).

Belongs to the NusB family.

Its function is as follows. Involved in transcription antitermination. Required for transcription of ribosomal RNA (rRNA) genes. Binds specifically to the boxA antiterminator sequence of the ribosomal RNA (rrn) operons. This is Transcription antitermination protein NusB from Fusobacterium nucleatum subsp. nucleatum (strain ATCC 25586 / DSM 15643 / BCRC 10681 / CIP 101130 / JCM 8532 / KCTC 2640 / LMG 13131 / VPI 4355).